A 215-amino-acid chain; its full sequence is MLGIRSSVKTCFKPMSLTSKRLISQSLLASKSTYRTPNFDDVLKENNDADKGRSYAYFMVGAMGLLSSAGAKSTVETFISSMTATADVLAMAKVEVNLAAIPLGKNVVVKWQGKPVFIRHRTPHEIQEANSVDMSALKDPQTDADRVKDPQWLIMLGICTHLGCVPIGEAGDFGGWFCPCHGSHYDISGRIRKGPAPLNLEIPAYEFDGDKVIVG.

The N-terminal 22 residues, Met1–Leu22, are a transit peptide targeting the mitochondrion. A propeptide spans Ile23–Ser30 (removed in mature form). Residues Lys31–Asp50 lie on the Mitochondrial matrix side of the membrane. A helical membrane pass occupies residues Lys51–Ser80. Over Ser81–Gly215 the chain is Mitochondrial intermembrane. The interval Ala90–Lys93 is hinge. The region spanning Pro123–Val214 is the Rieske domain. Positions 159, 161, 178, and 181 each coordinate [2Fe-2S] cluster. A disulfide bridge links Cys164 with Cys180.

It belongs to the Rieske iron-sulfur protein family. Component of the ubiquinol-cytochrome c oxidoreductase (cytochrome b-c1 complex, complex III, CIII), a multisubunit enzyme composed of 10 subunits. The complex is composed of 3 respiratory subunits cytochrome b (COB), cytochrome c1 (CYT1) and Rieske protein (RIP1), 2 core protein subunits COR1 and QCR2, and 5 low-molecular weight protein subunits QCR6, QCR7, QCR8, QCR9 and QCR10. The complex exists as an obligatory dimer and forms supercomplexes (SCs) in the inner mitochondrial membrane with a monomer or a dimer of cytochrome c oxidase (complex IV, CIV), resulting in 2 different assemblies (supercomplexes III(2)IV and III(2)IV(2)). RIP1 interacts with QCR10 on the intermembrane space (IMS) side, and with QCR9. [2Fe-2S] cluster serves as cofactor. Processed by both the mitochondrial processing peptidase (MPP) and the mitochondrial intermediate protease (MIP). Initially, MPP removes 22 amino acids from the newly imported precursor in the mitochondrial matrix. This proteolytic processing is then followed by a second proteolytic cleavage by MIP, which removes an octapeptide to generate mature-sized RIP1.

The protein localises to the mitochondrion inner membrane. It catalyses the reaction a quinol + 2 Fe(III)-[cytochrome c](out) = a quinone + 2 Fe(II)-[cytochrome c](out) + 2 H(+)(out). Functionally, component of the ubiquinol-cytochrome c oxidoreductase, a multisubunit transmembrane complex that is part of the mitochondrial electron transport chain which drives oxidative phosphorylation. The respiratory chain contains 3 multisubunit complexes succinate dehydrogenase (complex II, CII), ubiquinol-cytochrome c oxidoreductase (cytochrome b-c1 complex, complex III, CIII) and cytochrome c oxidase (complex IV, CIV), that cooperate to transfer electrons derived from NADH and succinate to molecular oxygen, creating an electrochemical gradient over the inner membrane that drives transmembrane transport and the ATP synthase. The cytochrome b-c1 complex catalyzes electron transfer from ubiquinol to cytochrome c, linking this redox reaction to translocation of protons across the mitochondrial inner membrane, with protons being carried across the membrane as hydrogens on the quinol. In the process called Q cycle, 2 protons are consumed from the matrix, 4 protons are released into the intermembrane space and 2 electrons are passed to cytochrome c. The Rieske protein is a catalytic core subunit containing a [2Fe-2S] iron-sulfur cluster. It cycles between 2 conformational states during catalysis to transfer electrons from the quinol bound in the Q(0) site in cytochrome b (COB) to cytochrome c1 (CYT1). The sequence is that of Cytochrome b-c1 complex subunit Rieske, mitochondrial (RIP1) from Saccharomyces cerevisiae (strain ATCC 204508 / S288c) (Baker's yeast).